We begin with the raw amino-acid sequence, 291 residues long: Exosome complex component rrp45 (291 aa).

It belongs to the RNase PH family. As to quaternary structure, component of the RNA exosome complex. Specifically part of the catalytically inactive RNA exosome core complex (Exo-9) which may associate with the catalytic subunits rrp6 and dis3 in cytoplasmic- and nuclear-specific RNA exosome complex forms. Exo-9 is formed by a hexameric base ring of RNase PH domain-containing subunits and a cap ring consisting of csl4, rrp4 and rrp40.

Its subcellular location is the cytoplasm. It is found in the nucleus. The protein localises to the nucleolus. Functionally, non-catalytic component of the RNA exosome complex which has 3'-&gt;5' exoribonuclease activity and participates in a multitude of cellular RNA processing and degradation events. In the nucleus, the RNA exosome complex is involved in proper maturation of stable RNA species such as rRNA, snRNA and snoRNA, in the elimination of RNA processing by-products and non-coding 'pervasive' transcripts, such as antisense RNA species and cryptic unstable transcripts (CUTs), and of mRNAs with processing defects, thereby limiting or excluding their export to the cytoplasm. In the cytoplasm, the RNA exosome complex is involved in general mRNA turnover and in RNA surveillance pathways, preventing translation of aberrant mRNAs. The catalytic inactive RNA exosome core complex of 9 subunits (Exo-9) is proposed to play a pivotal role in the binding and presentation of RNA for ribonucleolysis, and to serve as a scaffold for the association with catalytic subunits and accessory proteins or complexes. ski6 is part of the hexameric ring of RNase PH domain-containing subunits proposed to form a central channel which threads RNA substrates for degradation. The sequence is that of Exosome complex component rrp45 (rrp45) from Schizosaccharomyces pombe (strain 972 / ATCC 24843) (Fission yeast).